Reading from the N-terminus, the 196-residue chain is Retinol-binding protein 4 (196 aa).

Residues Met-1–Ala-21 form the signal peptide. 3 disulfide bridges follow: Cys-25–Cys-181, Cys-91–Cys-195, and Cys-141–Cys-150. Gln-119 is a substrate binding site.

The protein belongs to the calycin superfamily. Lipocalin family. Interacts with TTR. Interaction with TTR prevents its loss by filtration through the kidney glomeruli. Interacts with STRA6.

It is found in the secreted. Functionally, retinol-binding protein that mediates retinol transport in blood plasma. Delivers retinol from the liver stores to the peripheral tissues. Transfers the bound all-trans retinol to STRA6, that then facilitates retinol transport across the cell membrane. The protein is Retinol-binding protein 4 (RBP4) of Gallus gallus (Chicken).